The sequence spans 131 residues: MVKEFAYRGIPKEELDNMSLEKLFQLFNARQRRSLTRGITDGKRKLIEEIKAAKAGKLKNPIKTHVRDLIILPYMVDVTVNVFSGKEFRPVTIRTEMIGHYLGEYVITNRKVSHGAPGVGASRSSLYVPLK.

It belongs to the universal ribosomal protein uS19 family.

Protein S19 forms a complex with S13 that binds strongly to the 16S ribosomal RNA. The polypeptide is Small ribosomal subunit protein uS19 (Nitrosopumilus maritimus (strain SCM1)).